Reading from the N-terminus, the 488-residue chain is Cruciferin (488 aa).

An N-terminal signal peptide occupies residues 1 to 23 (MARLSSLLSFSLALLTFLHGSTA). 2 cysteine pairs are disulfide-bonded: Cys30/Cys63 and Cys105/Cys305. 2 Cupin type-1 domains span residues 35-262 (LNAL…RTAQ) and 311-460 (DNLD…EEAR). The tract at residues 116-163 (QPSGGSPFGEGQGQGQQGQGQGHQGQGQGQQGQQGQQGQQSQGQGFRD) is disordered. Residues 121-147 (SPFGEGQGQGQQGQGQGHQGQGQGQQG) show a composition bias toward gly residues. Residues 148–160 (QQGQQGQQSQGQG) are compositionally biased toward low complexity.

This sequence belongs to the 11S seed storage protein (globulins) family. Hexamer; each subunit is composed of an acidic and a basic chain derived from a single precursor and linked by a disulfide bond.

The protein localises to the rough endoplasmic reticulum. In terms of biological role, this is a seed storage protein. This Brassica napus (Rape) protein is Cruciferin (CRUA).